A 131-amino-acid polypeptide reads, in one-letter code: ATP synthase epsilon chain, chloroplastic (131 aa).

This sequence belongs to the ATPase epsilon chain family. In terms of assembly, F-type ATPases have 2 components, CF(1) - the catalytic core - and CF(0) - the membrane proton channel. CF(1) has five subunits: alpha(3), beta(3), gamma(1), delta(1), epsilon(1). CF(0) has three main subunits: a, b and c.

The protein localises to the plastid. It is found in the chloroplast thylakoid membrane. Its function is as follows. Produces ATP from ADP in the presence of a proton gradient across the membrane. The chain is ATP synthase epsilon chain, chloroplastic from Cyanidioschyzon merolae (strain NIES-3377 / 10D) (Unicellular red alga).